The primary structure comprises 164 residues: Lipoprotein signal peptidase (164 aa).

3 helical membrane passes run 12-32 (WLWLVVVVLIIDLGSKYLILQ), 70-90 (WFFAGIAIGISVILAVMMYRS), and 102-122 (ALIIGGALGNLFDRLWHGFVV). Residues aspartate 123 and aspartate 141 contribute to the active site. A helical transmembrane segment spans residues 137–157 (FNLADTAICVGAALIVLEGFL).

This sequence belongs to the peptidase A8 family.

The protein resides in the cell inner membrane. The enzyme catalyses Release of signal peptides from bacterial membrane prolipoproteins. Hydrolyzes -Xaa-Yaa-Zaa-|-(S,diacylglyceryl)Cys-, in which Xaa is hydrophobic (preferably Leu), and Yaa (Ala or Ser) and Zaa (Gly or Ala) have small, neutral side chains.. It participates in protein modification; lipoprotein biosynthesis (signal peptide cleavage). Its function is as follows. This protein specifically catalyzes the removal of signal peptides from prolipoproteins. The chain is Lipoprotein signal peptidase from Shigella sonnei (strain Ss046).